Here is a 374-residue protein sequence, read N- to C-terminus: Severin (374 aa).

Gelsolin-like repeat units follow at residues 58–109, 180–220, and 278–369; these read FTLE…DEYG, EGKT…KCSA, and EVIK…SFLK.

Belongs to the villin/gelsolin family.

Its function is as follows. Severin blocks the ends of F-actin and causes the fragmentation and depolymerization of actin filaments. This severin binds stably with actin both in a Ca(2+) dependent and a Ca(2+) independent manner. This chain is Severin (AG8), found in Echinococcus granulosus (Hydatid tapeworm).